Consider the following 170-residue polypeptide: dCTP pyrophosphatase 1 (170 aa).

Residues 1 to 27 (MSVAGGEIRGDTGGEDTAAPGRFSFSP) form a disordered region. Serine 2 is subject to N-acetylserine. A Phosphoserine modification is found at serine 2. Phosphothreonine is present on threonine 12. Substrate contacts are provided by residues histidine 38 and 47 to 51 (WEQFH). Positions 63 and 66 each coordinate Mg(2+). Residue tryptophan 73 coordinates substrate. Position 85 is a phosphoserine (serine 85). Positions 95 and 98 each coordinate Mg(2+). Tyrosine 102 provides a ligand contact to substrate. The segment at 147–170 (GAISEDQAVGPADIPCDSTGQTST) is disordered.

In terms of assembly, homotetramer. Mg(2+) is required as a cofactor.

It is found in the mitochondrion. It localises to the nucleus. Its subcellular location is the cytoplasm. The protein localises to the cytosol. The catalysed reaction is dCTP + H2O = dCMP + diphosphate + H(+). With respect to regulation, inhibited by the reaction end product PPi. Inhibited by dCDP. Inhibited by triptolide. Hydrolyzes deoxynucleoside triphosphates (dNTPs) to the corresponding nucleoside monophosphates. Has a strong preference for dCTP and its analogs including 5-iodo-dCTP and 5-methyl-dCTP for which it may even have a higher efficiency. May protect DNA or RNA against the incorporation of these genotoxic nucleotide analogs through their catabolism. This Homo sapiens (Human) protein is dCTP pyrophosphatase 1.